A 526-amino-acid polypeptide reads, in one-letter code: Probable feruloyl esterase B-2 (526 aa).

An N-terminal signal peptide occupies residues 1–18 (MTKLSLLPLLALASAVLA). Intrachain disulfides connect Cys27–Cys74 and Cys62–Cys113. Asn52, Asn97, and Asn137 each carry an N-linked (GlcNAc...) asparagine glycan. Cystine bridges form between Cys186–Cys441, Cys255–Cys272, Cys281–Cys291, and Cys503–Cys525. The Acyl-ester intermediate role is filled by Ser187. Asn233 carries an N-linked (GlcNAc...) asparagine glycan. Ca(2+) is bound by residues Asp256, Asp259, Ala261, Asp263, and Ile265. Asn311 is a glycosylation site (N-linked (GlcNAc...) asparagine). Active-site charge relay system residues include Asp400 and His440. An N-linked (GlcNAc...) asparagine glycan is attached at Asn516.

Belongs to the tannase family.

The protein resides in the secreted. The catalysed reaction is feruloyl-polysaccharide + H2O = ferulate + polysaccharide.. Involved in degradation of plant cell walls. Hydrolyzes the feruloyl-arabinose ester bond in arabinoxylans as well as the feruloyl-galactose and feruloyl-arabinose ester bonds in pectin. This Neosartorya fischeri (strain ATCC 1020 / DSM 3700 / CBS 544.65 / FGSC A1164 / JCM 1740 / NRRL 181 / WB 181) (Aspergillus fischerianus) protein is Probable feruloyl esterase B-2 (faeB-2).